We begin with the raw amino-acid sequence, 297 residues long: UDP-N-acetylenolpyruvoylglucosamine reductase (297 aa).

Residues 26-191 (QTGGPAEYLA…IAATFALKAG (166 aa)) enclose the FAD-binding PCMH-type domain. Arginine 170 is an active-site residue. The active-site Proton donor is serine 220. Glutamate 290 is an active-site residue.

This sequence belongs to the MurB family. Requires FAD as cofactor.

The protein localises to the cytoplasm. It catalyses the reaction UDP-N-acetyl-alpha-D-muramate + NADP(+) = UDP-N-acetyl-3-O-(1-carboxyvinyl)-alpha-D-glucosamine + NADPH + H(+). The protein operates within cell wall biogenesis; peptidoglycan biosynthesis. Functionally, cell wall formation. In Lactobacillus delbrueckii subsp. bulgaricus (strain ATCC 11842 / DSM 20081 / BCRC 10696 / JCM 1002 / NBRC 13953 / NCIMB 11778 / NCTC 12712 / WDCM 00102 / Lb 14), this protein is UDP-N-acetylenolpyruvoylglucosamine reductase.